A 512-amino-acid polypeptide reads, in one-letter code: NAD(P)H-quinone oxidoreductase chain 4, chloroplastic (512 aa).

The next 14 helical transmembrane spans lie at 4-24 (LPWLTIIVLFPILAGLLIPFI), 34-54 (WYALGVGILDFLLITYIFGYH), 87-107 (MPLVLLTGFVTTLAILGAWPV), 111-131 (AKLFYFLMLAMYSGQIGVFVS), 134-154 (LLLFFFMWELELIPVYLLLLV), 167-187 (FILYTAIGSIFILLAGLTMAF), 210-230 (ILLYIGFLIAYAVKLPAFPLH), 241-261 (HYSTCMLLAGILLKMGGYALI), 273-293 (LIFAPFLIIIGVINIIYAALT), 312-332 (MGFVLIGIGSLTNLGLSGAVL), 333-353 (QMISHGLIGASLFFLAGTTYD), 373-395 (TFAMFTTCSLASLALPGMSGFVA), 416-436 (IITFLEGIGIILTPIYLLSML), and 462-482 (IFVITCLVLPILGIGIYPKMA).

This sequence belongs to the complex I subunit 4 family.

Its subcellular location is the plastid. The protein localises to the chloroplast thylakoid membrane. It carries out the reaction a plastoquinone + NADH + (n+1) H(+)(in) = a plastoquinol + NAD(+) + n H(+)(out). The catalysed reaction is a plastoquinone + NADPH + (n+1) H(+)(in) = a plastoquinol + NADP(+) + n H(+)(out). The protein is NAD(P)H-quinone oxidoreductase chain 4, chloroplastic of Chlorokybus atmophyticus (Soil alga).